The following is a 567-amino-acid chain: MEYDYIIIGAGSAGNVLAARLTEDADVTVLLLEAGGPDYRLDFRTQMPAALAFPLQGKRYNWAYETDPEPHMNNRRMECGRGKGLGGSSLINGMCYIRGNAMDFDHWASLSGLEDWSYLDCLPYFRKAETRDIGPNDFHGGEGPVSVTTPKIGNNPLFHAMVAAGVQAGYPRTDDLNGYQQEGFGPMDRTVTPKGRRASTARGYLDQARPRNNLTIITHALTDRILFEGKRATGVRYLKGDAGTGQTAYARREVLLCGGAIASPQILQRSGIGPAELLQRLDIPLVQALPGVGENLQDHLEMYLQYSCKQPVSLYPALLWFNQPKIGIEWLFNGTGVGASNQFEAGGFIRSRDAFTWPNIQYHFLPVAINYNGSNAVKEHGFQAHVGSMRSPSRGRIQVKSKDPRQHPSILFNYMSSEQDWHEFRDAIRITREIIAQPALDPYRGREISPGANVQNDDELDAFIREHAETAYHPSCSCKMGDDKMAVVDGQGRVHGVQGLRVVDASIMSQIITGNLNATTIMIAEKIADRIRGCQPLAKSNAAYFIAGDTPARTSPVRHSLPVTSYP.

Residue 4-33 (DYIIIGAGSAGNVLAARLTEDADVTVLLLE) participates in FAD binding. H473 (proton acceptor) is an active-site residue.

It belongs to the GMC oxidoreductase family. FAD is required as a cofactor.

It catalyses the reaction choline + A = betaine aldehyde + AH2. The enzyme catalyses betaine aldehyde + NAD(+) + H2O = glycine betaine + NADH + 2 H(+). It functions in the pathway amine and polyamine biosynthesis; betaine biosynthesis via choline pathway; betaine aldehyde from choline (cytochrome c reductase route): step 1/1. In terms of biological role, involved in the biosynthesis of the osmoprotectant glycine betaine. Catalyzes the oxidation of choline to betaine aldehyde and betaine aldehyde to glycine betaine at the same rate. The polypeptide is Oxygen-dependent choline dehydrogenase (Yersinia pestis (strain Pestoides F)).